A 332-amino-acid chain; its full sequence is Phenol 2-monooxygenase, oxygenase component MhpL (332 aa).

It belongs to the TmoE/XamoE family.

The catalysed reaction is phenol + NADH + O2 + H(+) = catechol + NAD(+) + H2O. The protein operates within aromatic compound metabolism; phenol degradation. Functionally, part of a multicomponent enzyme which catalyzes the degradation of phenol and some of its methylated derivatives. This is Phenol 2-monooxygenase, oxygenase component MhpL (mphL) from Acinetobacter pittii (strain PHEA-2).